The sequence spans 384 residues: S-adenosylmethionine synthase (384 aa).

Residue histidine 15 participates in ATP binding. Aspartate 17 is a binding site for Mg(2+). Residue glutamate 43 participates in K(+) binding. Residues glutamate 56 and glutamine 99 each coordinate L-methionine. A flexible loop region spans residues 99 to 109 (QSPDINQGVDR). Residues 164–166 (DAK), 231–232 (RF), aspartate 240, 246–247 (RK), alanine 263, and lysine 267 contribute to the ATP site. Position 240 (aspartate 240) interacts with L-methionine. An L-methionine-binding site is contributed by lysine 271.

It belongs to the AdoMet synthase family. Homotetramer; dimer of dimers. Requires Mg(2+) as cofactor. It depends on K(+) as a cofactor.

It localises to the cytoplasm. The catalysed reaction is L-methionine + ATP + H2O = S-adenosyl-L-methionine + phosphate + diphosphate. It functions in the pathway amino-acid biosynthesis; S-adenosyl-L-methionine biosynthesis; S-adenosyl-L-methionine from L-methionine: step 1/1. Functionally, catalyzes the formation of S-adenosylmethionine (AdoMet) from methionine and ATP. The overall synthetic reaction is composed of two sequential steps, AdoMet formation and the subsequent tripolyphosphate hydrolysis which occurs prior to release of AdoMet from the enzyme. This chain is S-adenosylmethionine synthase, found in Shewanella woodyi (strain ATCC 51908 / MS32).